The primary structure comprises 332 residues: Glycerol-3-phosphate dehydrogenase [NAD(P)+] (332 aa).

NADPH contacts are provided by S11, F12, K32, and K106. Residues K106, G137, and S139 each contribute to the sn-glycerol 3-phosphate site. An NADPH-binding site is contributed by A141. Positions 192, 245, 255, 256, and 257 each coordinate sn-glycerol 3-phosphate. K192 (proton acceptor) is an active-site residue. Residue R256 participates in NADPH binding. Positions 280 and 282 each coordinate NADPH.

It belongs to the NAD-dependent glycerol-3-phosphate dehydrogenase family.

Its subcellular location is the cytoplasm. The enzyme catalyses sn-glycerol 3-phosphate + NAD(+) = dihydroxyacetone phosphate + NADH + H(+). It carries out the reaction sn-glycerol 3-phosphate + NADP(+) = dihydroxyacetone phosphate + NADPH + H(+). It participates in membrane lipid metabolism; glycerophospholipid metabolism. Catalyzes the reduction of the glycolytic intermediate dihydroxyacetone phosphate (DHAP) to sn-glycerol 3-phosphate (G3P), the key precursor for phospholipid synthesis. The polypeptide is Glycerol-3-phosphate dehydrogenase [NAD(P)+] (Staphylococcus carnosus (strain TM300)).